The primary structure comprises 336 residues: Torsin-1B (336 aa).

The first 24 residues, Met-1–Ala-24, serve as a signal peptide directing secretion. Asn-64 carries N-linked (GlcNAc...) asparagine glycosylation. Gly-109 to Asn-116 serves as a coordination point for ATP. N-linked (GlcNAc...) asparagine glycosylation is present at Asn-165.

Belongs to the ClpA/ClpB family. Torsin subfamily. As to quaternary structure, homohexamer. Interacts with TOR1A; the interaction may be specific of neural tissues. Interacts with TOR1AIP1; TOR1AIP1 is required for TOR1B location on the nuclear membrane. Interacts (ATP-bound) with TOR1AIP2; important for endoplasmic reticulum integrity. In terms of processing, N-glycosylated. As to expression, highly expressed in liver and muscle; lower expression levels are observed in brain (at protein level).

The protein localises to the endoplasmic reticulum lumen. It localises to the nucleus membrane. The catalysed reaction is ATP + H2O = ADP + phosphate + H(+). In terms of biological role, may serve as a molecular chaperone assisting in the proper folding of secreted and/or membrane proteins. Plays a role in non-neural cells nuclear envelope and endoplasmic reticulum integrity. May have a redundant function with TOR1A in non-neural tissues. The protein is Torsin-1B (Tor1b) of Mus musculus (Mouse).